Here is a 248-residue protein sequence, read N- to C-terminus: Trypsin I-P1 (248 aa).

The first 15 residues, 1-15 (MKFLVLVAFVGVTVA), serve as a signal peptide directing secretion. Positions 16–25 (FPISDEDDDK) are cleaved as a propeptide — activation peptide. In terms of domain architecture, Peptidase S1 spans 26–246 (IVGGYSCARS…YVSWIKTTMS (221 aa)). 6 disulfides stabilise this stretch: Cys32/Cys162, Cys50/Cys66, Cys134/Cys235, Cys141/Cys208, Cys173/Cys187, and Cys198/Cys222. His65 acts as the Charge relay system in catalysis. 3 residues coordinate Ca(2+): Glu77, Asn79, and Glu87. Asp109 functions as the Charge relay system in the catalytic mechanism. Ser202 functions as the Charge relay system in the catalytic mechanism.

The protein belongs to the peptidase S1 family. Ca(2+) is required as a cofactor. High levels are seen in the pancreas while lower levels are found in the liver, spleen and thymus.

The protein resides in the secreted. It localises to the extracellular space. The catalysed reaction is Preferential cleavage: Arg-|-Xaa, Lys-|-Xaa.. This chain is Trypsin I-P1, found in Gallus gallus (Chicken).